The following is an 843-amino-acid chain: Elongation factor 2 (843 aa).

The region spanning 17–344 (HNIRNMSVIA…MMIFHLPSPH (328 aa)) is the tr-type G domain. Residues 26–33 (AHVDHGKS) and 158–161 (NKMD) each bind GTP. Position 700 is a diphthamide (His-700). Ser-837 bears the Phosphoserine mark.

This sequence belongs to the TRAFAC class translation factor GTPase superfamily. Classic translation factor GTPase family. In terms of assembly, may interact with glutaredoxins (Grxs). As to expression, expressed in root, stem, leaves, flowers and siliques.

It localises to the cytoplasm. The catalysed reaction is GTP + H2O = GDP + phosphate + H(+). The protein operates within protein biosynthesis; polypeptide chain elongation. Its function is as follows. Catalyzes the GTP-dependent ribosomal translocation step during translation elongation. During this step, the ribosome changes from the pre-translocational (PRE) to the post-translocational (POST) state as the newly formed A-site-bound peptidyl-tRNA and P-site-bound deacylated tRNA move to the P and E sites, respectively. Catalyzes the coordinated movement of the two tRNA molecules, the mRNA and conformational changes in the ribosome. Involved in cold responses leading to freezing tolerance via the induction of cold-responsive genes. The protein is Elongation factor 2 of Arabidopsis thaliana (Mouse-ear cress).